The following is a 32-amino-acid chain: Delta-actitoxin-Eqd1a (32 aa).

This sequence belongs to the sea anemone short toxin (type III) family. Contains 4 disulfide bonds.

Its subcellular location is the secreted. The protein resides in the nematocyst. In terms of biological role, binds specifically to sodium channels (Nav) of the axonal membrane of crayfish and prolongs the falling phase of the action potential. It also increases the maximum rates of rise of both action potential and resting potential. Is only active on crustaceans. This is Delta-actitoxin-Eqd1a from Entacmaea quadricolor (Bubble-tip anemone).